Consider the following 187-residue polypeptide: Protein GrpE (187 aa).

The segment at 1 to 25 (MADEQNLDNRAPEETPAAEGTSAGE) is disordered.

It belongs to the GrpE family. Homodimer.

It is found in the cytoplasm. Its function is as follows. Participates actively in the response to hyperosmotic and heat shock by preventing the aggregation of stress-denatured proteins, in association with DnaK and GrpE. It is the nucleotide exchange factor for DnaK and may function as a thermosensor. Unfolded proteins bind initially to DnaJ; upon interaction with the DnaJ-bound protein, DnaK hydrolyzes its bound ATP, resulting in the formation of a stable complex. GrpE releases ADP from DnaK; ATP binding to DnaK triggers the release of the substrate protein, thus completing the reaction cycle. Several rounds of ATP-dependent interactions between DnaJ, DnaK and GrpE are required for fully efficient folding. This Azotobacter vinelandii (strain DJ / ATCC BAA-1303) protein is Protein GrpE.